The following is a 217-amino-acid chain: MGQKINPIGLRVGIIRDWEAKWYAEKDFASLLHEDLKIRKFIDNELKEASVSHVEIERAANRINIAIHTGKPGMVIGKGGSEIEKLRNKLNALTDKKVHINVIEIKKVDLDARLVAENIARQLENRASFRRVQKQAITRAMKLGAKGIKTQISGRLGGADIARAEQYSEGTVPLHTLRADIDYAHAEADTTYGKLGVKVWIYRGEVLPTKNTSGGGK.

In terms of domain architecture, KH type-2 spans 38-106; sequence IRKFIDNELK…KVHINVIEIK (69 aa).

The protein belongs to the universal ribosomal protein uS3 family. In terms of assembly, part of the 30S ribosomal subunit. Forms a tight complex with proteins S10 and S14.

Functionally, binds the lower part of the 30S subunit head. Binds mRNA in the 70S ribosome, positioning it for translation. The sequence is that of Small ribosomal subunit protein uS3 (rpsC) from Staphylococcus aureus (strain COL).